A 361-amino-acid polypeptide reads, in one-letter code: NudC domain-containing protein 3 (361 aa).

Residues 87–97 are compositionally biased toward basic and acidic residues; the sequence is KIRRKEEEEAK. 2 disordered regions span residues 87–106 and 124–158; these read KIRR…AAEK and LDGH…VAGA. Residue Ser-146 is modified to Phosphoserine. Over residues 148 to 158 the composition is skewed to low complexity; it reads EAEAPGAVAGA. The CS domain maps to 185–277; it reads AVRENYTWSQ…VGEYWWNAIL (93 aa). A phosphoserine mark is found at Ser-340 and Ser-355.

The protein is NudC domain-containing protein 3 (NUDCD3) of Homo sapiens (Human).